Consider the following 577-residue polypeptide: Arginine--tRNA ligase (577 aa).

The short motif at 122 to 132 is the 'HIGH' region element; the sequence is PNVAKEMHVGH.

This sequence belongs to the class-I aminoacyl-tRNA synthetase family. Monomer.

It localises to the cytoplasm. The enzyme catalyses tRNA(Arg) + L-arginine + ATP = L-arginyl-tRNA(Arg) + AMP + diphosphate. In Escherichia coli O139:H28 (strain E24377A / ETEC), this protein is Arginine--tRNA ligase.